Reading from the N-terminus, the 345-residue chain is Ketol-acid reductoisomerase (NADP(+)) (345 aa).

In terms of domain architecture, KARI N-terminal Rossmann spans 2–182 (AKVYHDSSAD…GTTRAGVLET (181 aa)). Residues 25–28 (YGSQ), Arg48, Ser51, Ser53, and 83–86 (DTEQ) contribute to the NADP(+) site. Residue His108 is part of the active site. Residue Gly134 participates in NADP(+) binding. A KARI C-terminal knotted domain is found at 183–328 (TFKEETETDL…AQLRDMMTFL (146 aa)). Positions 191, 195, 227, and 231 each coordinate Mg(2+). Ser252 provides a ligand contact to substrate.

Belongs to the ketol-acid reductoisomerase family. It depends on Mg(2+) as a cofactor.

The enzyme catalyses (2R)-2,3-dihydroxy-3-methylbutanoate + NADP(+) = (2S)-2-acetolactate + NADPH + H(+). It carries out the reaction (2R,3R)-2,3-dihydroxy-3-methylpentanoate + NADP(+) = (S)-2-ethyl-2-hydroxy-3-oxobutanoate + NADPH + H(+). It participates in amino-acid biosynthesis; L-isoleucine biosynthesis; L-isoleucine from 2-oxobutanoate: step 2/4. It functions in the pathway amino-acid biosynthesis; L-valine biosynthesis; L-valine from pyruvate: step 2/4. In terms of biological role, involved in the biosynthesis of branched-chain amino acids (BCAA). Catalyzes an alkyl-migration followed by a ketol-acid reduction of (S)-2-acetolactate (S2AL) to yield (R)-2,3-dihydroxy-isovalerate. In the isomerase reaction, S2AL is rearranged via a Mg-dependent methyl migration to produce 3-hydroxy-3-methyl-2-ketobutyrate (HMKB). In the reductase reaction, this 2-ketoacid undergoes a metal-dependent reduction by NADPH to yield (R)-2,3-dihydroxy-isovalerate. The sequence is that of Ketol-acid reductoisomerase (NADP(+)) from Koribacter versatilis (strain Ellin345).